A 307-amino-acid polypeptide reads, in one-letter code: Ribosomal RNA small subunit methyltransferase H (307 aa).

S-adenosyl-L-methionine is bound by residues 32–34, D52, F78, D99, and Q106; that span reads GGH.

Belongs to the methyltransferase superfamily. RsmH family.

The protein localises to the cytoplasm. It catalyses the reaction cytidine(1402) in 16S rRNA + S-adenosyl-L-methionine = N(4)-methylcytidine(1402) in 16S rRNA + S-adenosyl-L-homocysteine + H(+). Specifically methylates the N4 position of cytidine in position 1402 (C1402) of 16S rRNA. The sequence is that of Ribosomal RNA small subunit methyltransferase H from Caldicellulosiruptor saccharolyticus (strain ATCC 43494 / DSM 8903 / Tp8T 6331).